A 176-amino-acid chain; its full sequence is Transcriptional repressor NrdR (176 aa).

A zinc finger lies at 3 to 34 (CPFCQHTDSRVLESRSAEAGQSVRRRRECLQC). One can recognise an ATP-cone domain in the interval 49–139 (ITVIKRNQDR…VYRQFRGIRD (91 aa)). Residues 151 to 176 (GDGPLPSVLDEPYEDTAQPTIMISPQ) are disordered. Residues 167–176 (AQPTIMISPQ) are compositionally biased toward polar residues.

This sequence belongs to the NrdR family. It depends on Zn(2+) as a cofactor.

Negatively regulates transcription of bacterial ribonucleotide reductase nrd genes and operons by binding to NrdR-boxes. This Acaryochloris marina (strain MBIC 11017) protein is Transcriptional repressor NrdR.